A 641-amino-acid polypeptide reads, in one-letter code: Chaperone protein DnaK (641 aa).

Position 199 is a phosphothreonine; by autocatalysis (threonine 199). Positions 577–590 (KGDNKDEIETRTQK) are enriched in basic and acidic residues. The interval 577-641 (KGDNKDEIET…EFEEVDDKKK (65 aa)) is disordered. Positions 617–626 (GAEQASAQQD) are enriched in low complexity. Residues 627-641 (DVVDAEFEEVDDKKK) are compositionally biased toward acidic residues.

This sequence belongs to the heat shock protein 70 family.

Acts as a chaperone. The protein is Chaperone protein DnaK of Thioalkalivibrio sulfidiphilus (strain HL-EbGR7).